A 496-amino-acid chain; its full sequence is Glycylpeptide N-tetradecanoyltransferase 1 (496 aa).

The interval 1 to 81 (MADESETAVK…DSTQDQPVKM (81 aa)) is disordered. Serine 31 and serine 47 each carry phosphoserine. Positions 55–66 (KKKKKKQKKKKE) are enriched in basic residues. Position 83 is a phosphoserine (serine 83). Tetradecanoyl-CoA is bound by residues glutamine 118, phenylalanine 119, tryptophan 120, phenylalanine 247, leucine 248, cysteine 249, valine 250, serine 256, arginine 258, valine 259, and alanine 260.

The protein belongs to the NMT family.

The protein localises to the cytoplasm. It localises to the cytosol. It is found in the membrane. It carries out the reaction N-terminal glycyl-[protein] + tetradecanoyl-CoA = N-tetradecanoylglycyl-[protein] + CoA + H(+). The enzyme catalyses N-terminal glycyl-L-lysyl-[protein] + tetradecanoyl-CoA = N-terminal glycyl-(N(6)-tetradecanoyl)-L-lysyl-[protein] + CoA + H(+). In terms of biological role, adds a myristoyl group to the N-terminal glycine residue of certain cellular and viral proteins. Also able to mediate N-terminal lysine myristoylation of proteins: catalyzes myristoylation of ARF6 on both 'Gly-2' and 'Lys-3'. Lysine myristoylation is required to maintain ARF6 on membranes during the GTPase cycle. This chain is Glycylpeptide N-tetradecanoyltransferase 1 (Nmt1), found in Rattus norvegicus (Rat).